Here is a 484-residue protein sequence, read N- to C-terminus: MKFFPTRTLLCLCIAAPCLPAIAQNDPIELPDIGTVAGSTLTIDQELIYGDAYMRMLRNNQPVINDPVLNEYIDNLGHRLVASANDVKTPFTFFMIRDRNINAFAFFGGYVALHSGLFLHAQSESELASVMAHEIAHVTQRHLARSMEEQARRSPATIAALAGSLLLAIAAPEAGIAAINATMAGSIQGQINYTRSNEKEADRFGIATLAKAGFDANAMPQFFTRLADEYRYASKPPPMLLTHPLPEDRITDSRERARQYPPLKLAPHLDYHLARARIIARYAGIDADAALDWFARSEKKIDATLQPSIQYGKALVYLDLKQFDKAEPLLTQLVKEQPDNHFYLDAISDLYIELKQADKAQSLLEKALKQTPNNSVLTINYANVLLKQDKFTDAIRILQRYTHDNPNDINGWQLLSEANSRLGNSAEDLAARGEIMALQANWNKAIQFYTQASQLVELGSLAQARYDARIDQLMVQRERFLSLQ.

An N-terminal signal peptide occupies residues 1 to 23 (MKFFPTRTLLCLCIAAPCLPAIA). Position 133 (His-133) interacts with Zn(2+). The active site involves Glu-134. Zn(2+) contacts are provided by His-137 and Glu-198. Asp-202 acts as the Proton donor in catalysis. 4 TPR repeats span residues 307–340 (PSIQYGKALVYLDLKQFDKAEPLLTQLVKEQPDN), 341–374 (HFYLDAISDLYIELKQADKAQSLLEKALKQTPNN), 376–408 (VLTINYANVLLKQDKFTDAIRILQRYTHDNPND), and 426–459 (AEDLAARGEIMALQANWNKAIQFYTQASQLVELG).

It belongs to the peptidase M48 family. BepA subfamily. The cofactor is Zn(2+).

It is found in the periplasm. Its function is as follows. Functions both as a chaperone and a metalloprotease. Maintains the integrity of the outer membrane by promoting either the assembly or the elimination of outer membrane proteins, depending on their folding state. This Vibrio cholerae serotype O1 (strain ATCC 39315 / El Tor Inaba N16961) protein is Putative beta-barrel assembly-enhancing protease.